Reading from the N-terminus, the 219-residue chain is Small ribosomal subunit protein uS19 (219 aa).

A unknown region spans residues 1–128; the sequence is MGFKGAWNKR…YEEIYAQYKQ (128 aa). The tract at residues 129-219 is small ribosomal subunit protein uS19; sequence MTEKKAYVDP…DKTAKVVKKK (91 aa).

Belongs to the universal ribosomal protein uS19 family.

Its function is as follows. Protein S19 forms a complex with S13 that binds strongly to the 16S ribosomal RNA. The protein is Small ribosomal subunit protein uS19 of Aquifex pyrophilus.